We begin with the raw amino-acid sequence, 396 residues long: MQNMVILGATGSIGASTLSVISANPDAYRVYALVANASVDKMLALCVTHRPQVAHMVDSQAALALQAKLPPELNIQVSSGEDELIALVTATEVDTVMAAIVGAAGLVPTLAAVKAGKRVLLANKEALVMSGELFIEATKASGATLLPVDSEHNAIFQCLPEEVQANLGRCDLAASGISHILLTGSGGPFLTAELASLAAMTPAQACKHPNWSMGPKISVDSATMMNKGLEFIEARWLFNTQNDQLKVVIHPQSVIHSMVQYRDGSVIAQMGNPDMRTPIAHCMSYPQRISSGVEPLDFFKVGQLSFCEPDFNRFPCLALAIAACAQGQEATTVLNAANEIAVEAFLQGQIGFTHIAKVNEACLSSVPKRAMTSIDDIIALDAQTRIYAREQLAKLA.

5 residues coordinate NADPH: threonine 10, glycine 11, serine 12, isoleucine 13, and asparagine 123. Position 124 (lysine 124) interacts with 1-deoxy-D-xylulose 5-phosphate. Glutamate 125 contributes to the NADPH binding site. Position 149 (aspartate 149) interacts with Mn(2+). Positions 150, 151, 185, and 208 each coordinate 1-deoxy-D-xylulose 5-phosphate. Glutamate 151 is a binding site for Mn(2+). Glycine 214 contributes to the NADPH binding site. Residues serine 221, asparagine 226, lysine 227, and glutamate 230 each contribute to the 1-deoxy-D-xylulose 5-phosphate site. A Mn(2+)-binding site is contributed by glutamate 230.

This sequence belongs to the DXR family. It depends on Mg(2+) as a cofactor. The cofactor is Mn(2+).

The catalysed reaction is 2-C-methyl-D-erythritol 4-phosphate + NADP(+) = 1-deoxy-D-xylulose 5-phosphate + NADPH + H(+). It participates in isoprenoid biosynthesis; isopentenyl diphosphate biosynthesis via DXP pathway; isopentenyl diphosphate from 1-deoxy-D-xylulose 5-phosphate: step 1/6. Catalyzes the NADPH-dependent rearrangement and reduction of 1-deoxy-D-xylulose-5-phosphate (DXP) to 2-C-methyl-D-erythritol 4-phosphate (MEP). The protein is 1-deoxy-D-xylulose 5-phosphate reductoisomerase of Shewanella sp. (strain MR-7).